Consider the following 125-residue polypeptide: Natriuretic peptide GNP1 (125 aa).

The first 25 residues, 1–25, serve as a signal peptide directing secretion; that stretch reads MDPRLVRAGSLVLLLALLVQDQGAA. Disordered stretches follow at residues 23–78 and 105–125; these read GAAH…PAFK and VSGM…TGKK. Residues 26-85 constitute a propeptide that is removed on maturation; it reads HPARAGQKYKPLIRRSEEDSQALGQEGDVAARAADEEEDAAGPGDALRQPAFKTLLASRE. Cys94 and Cys110 are oxidised to a cystine.

This sequence belongs to the natriuretic peptide family. In terms of tissue distribution, expressed by the venom gland.

It is found in the secreted. In terms of biological role, exhibits natriuretic and vasodepressor activity. Acts by stimulating cGMP. In Varanus varius (Lace monitor lizard), this protein is Natriuretic peptide GNP1.